The sequence spans 186 residues: C-type lectin domain family 19 member A (186 aa).

Positions 1–19 are cleaved as a signal peptide; it reads MQRWTLWAAAFLTLHSAQA. A C-type lectin domain is found at 47–179; it reads FKGHCYRFFP…CSRKFPFVCK (133 aa). An N-linked (GlcNAc...) asparagine glycan is attached at Asn58. Disulfide bonds link Cys68–Cys178 and Cys151–Cys170.

Its subcellular location is the secreted. This Homo sapiens (Human) protein is C-type lectin domain family 19 member A.